The following is a 147-amino-acid chain: uncharacterized protein (147 aa).

Residues 1 to 137 (MRDNTIGSLI…LYELMTKVHK (137 aa)) form the HTH marR-type domain. A DNA-binding region (H-T-H motif) is located at residues 53–76 (QMELAEKVTVTQGGISRMLTRLEK).

This is an uncharacterized protein from Bacillus cereus (strain ATCC 10987 / NRS 248).